A 686-amino-acid chain; its full sequence is Tripartite terminase subunit 3 (686 aa).

A Walker A motif motif is present at residues 219 to 226 (IPRRHGKT). The short motif at 314–319 (LLYVDE) is the Walker B motif element. Glu319 serves as the catalytic For ATPase activity. Active-site for nuclease activity residues include Asp475, Glu548, and Asp660.

This sequence belongs to the herpesviridae TRM3 protein family. As to quaternary structure, interacts with the terminase subunits TRM1 and TRM2. Interacts with portal protein.

Its subcellular location is the host nucleus. Functionally, component of the molecular motor that translocates viral genomic DNA in empty capsid during DNA packaging. Forms a tripartite terminase complex together with TRM1 and TRM2 in the host cytoplasm. Once the complex reaches the host nucleus, it interacts with the capsid portal vertex. This portal forms a ring in which genomic DNA is translocated into the capsid. TRM3 carries an RNase H-like nuclease activity that plays an important role for the cleavage of concatemeric viral DNA into unit length genomes. The polypeptide is Tripartite terminase subunit 3 (Equine herpesvirus 2 (strain 86/87) (EHV-2)).